The primary structure comprises 506 residues: Sugar transport protein 5 (506 aa).

The Cytoplasmic portion of the chain corresponds to 1-19 (MAGGGLALDVSSAGNIDAK). The next 12 membrane-spanning stretches (helical) occupy residues 20–40 (ITAA…IFGY), 81–101 (LLTA…LVAS), 117–137 (GFTF…AMLI), 141–161 (ILLG…LSEV), 168–188 (GAFN…ANLI), 201–221 (ISLG…LFIS), 287–307 (LVVA…VNAF), 325–345 (IATF…TMVI), 352–372 (FLFI…AVLL), 390–410 (VTVV…WGPL), 430–450 (LSVA…LATL), and 456–476 (GAFL…IMFL). Over 477-506 (PETKGIPVDSMYQVWEKHWYWQRFTKPTST) the chain is Cytoplasmic.

Belongs to the major facilitator superfamily. Sugar transporter (TC 2.A.1.1) family.

Its subcellular location is the membrane. Functionally, mediates an active uptake of hexoses, probably by sugar/hydrogen symport. The sequence is that of Sugar transport protein 5 (STP5) from Arabidopsis thaliana (Mouse-ear cress).